A 334-amino-acid polypeptide reads, in one-letter code: Transaldolase (334 aa).

The Schiff-base intermediate with substrate role is filled by lysine 136.

The protein belongs to the transaldolase family. Type 1 subfamily. In terms of assembly, homodimer.

It localises to the cytoplasm. It carries out the reaction D-sedoheptulose 7-phosphate + D-glyceraldehyde 3-phosphate = D-erythrose 4-phosphate + beta-D-fructose 6-phosphate. It functions in the pathway carbohydrate degradation; pentose phosphate pathway; D-glyceraldehyde 3-phosphate and beta-D-fructose 6-phosphate from D-ribose 5-phosphate and D-xylulose 5-phosphate (non-oxidative stage): step 2/3. In terms of biological role, transaldolase is important for the balance of metabolites in the pentose-phosphate pathway. In Nostoc punctiforme (strain ATCC 29133 / PCC 73102), this protein is Transaldolase.